A 245-amino-acid polypeptide reads, in one-letter code: 23S rRNA (guanosine-2'-O-)-methyltransferase RlmB (245 aa).

S-adenosyl-L-methionine contacts are provided by Gly197, Ile217, and Leu226.

This sequence belongs to the class IV-like SAM-binding methyltransferase superfamily. RNA methyltransferase TrmH family. RlmB subfamily.

The protein resides in the cytoplasm. It carries out the reaction guanosine(2251) in 23S rRNA + S-adenosyl-L-methionine = 2'-O-methylguanosine(2251) in 23S rRNA + S-adenosyl-L-homocysteine + H(+). In terms of biological role, specifically methylates the ribose of guanosine 2251 in 23S rRNA. The chain is 23S rRNA (guanosine-2'-O-)-methyltransferase RlmB from Bordetella parapertussis (strain 12822 / ATCC BAA-587 / NCTC 13253).